A 311-amino-acid polypeptide reads, in one-letter code: Small ribosomal subunit biogenesis GTPase RsgA (311 aa).

The CP-type G domain maps to Leu-77–Phe-239. GTP-binding positions include Asn-126–Asp-129 and Gly-180–Thr-188. Positions 263, 268, 270, and 276 each coordinate Zn(2+).

Belongs to the TRAFAC class YlqF/YawG GTPase family. RsgA subfamily. In terms of assembly, monomer. Associates with 30S ribosomal subunit, binds 16S rRNA. It depends on Zn(2+) as a cofactor.

Its subcellular location is the cytoplasm. Its function is as follows. One of several proteins that assist in the late maturation steps of the functional core of the 30S ribosomal subunit. Helps release RbfA from mature subunits. May play a role in the assembly of ribosomal proteins into the subunit. Circularly permuted GTPase that catalyzes slow GTP hydrolysis, GTPase activity is stimulated by the 30S ribosomal subunit. The polypeptide is Small ribosomal subunit biogenesis GTPase RsgA (Azobacteroides pseudotrichonymphae genomovar. CFP2).